The chain runs to 186 residues: Large ribosomal subunit protein bL17 (186 aa).

Residues 123–186 (SEADRARRVK…ADEAEGSSED (64 aa)) form a disordered region. The segment covering 139-177 (EAAAAAPQAAVEPEAVEAAPAPDAPEAAPEAEAAAPQPA) has biased composition (low complexity).

The protein belongs to the bacterial ribosomal protein bL17 family. As to quaternary structure, part of the 50S ribosomal subunit. Contacts protein L32.

This chain is Large ribosomal subunit protein bL17, found in Mycobacterium avium (strain 104).